The sequence spans 321 residues: MKVRLGVDMMGGDHDPLVVWEALGEVLLSSTGEQPVEFTVFATSDVHHQLMNSPLSRSVRIVTAEDFVSMEDSLLAAVRKKRSSMALGLDALQQGDLDGFVSSGNTAALVTLARSKIPMIPAVPRPALLVSVPTLSGFAVILDVGATVSVNPDEMVGFARMGLAYRQSLSSNSNQPFTLGLLNIGSEERKGTDSHKQTFRMLRNIFGSAFLGNIESGDVFSGKVDIVVTDGFTGNVFLKTAEGLFDFLRHILGDRLEKSIKMQFDYTIYPGSIISGLSRLVIKCHGKSHGTALFGGISGAIDLARANVCSRIADRFGDNVV.

The protein belongs to the PlsX family. As to quaternary structure, homodimer. Probably interacts with PlsY.

The protein localises to the cytoplasm. The enzyme catalyses a fatty acyl-[ACP] + phosphate = an acyl phosphate + holo-[ACP]. The protein operates within lipid metabolism; phospholipid metabolism. In terms of biological role, catalyzes the reversible formation of acyl-phosphate (acyl-PO(4)) from acyl-[acyl-carrier-protein] (acyl-ACP). This enzyme utilizes acyl-ACP as fatty acyl donor, but not acyl-CoA. This Chlamydia trachomatis serovar L2 (strain ATCC VR-902B / DSM 19102 / 434/Bu) protein is Phosphate acyltransferase.